Here is a 437-residue protein sequence, read N- to C-terminus: Glutamate-1-semialdehyde 2,1-aminomutase (437 aa).

Lys-273 is modified (N6-(pyridoxal phosphate)lysine).

This sequence belongs to the class-III pyridoxal-phosphate-dependent aminotransferase family. HemL subfamily. Homodimer. It depends on pyridoxal 5'-phosphate as a cofactor.

It localises to the cytoplasm. The catalysed reaction is (S)-4-amino-5-oxopentanoate = 5-aminolevulinate. It functions in the pathway porphyrin-containing compound metabolism; protoporphyrin-IX biosynthesis; 5-aminolevulinate from L-glutamyl-tRNA(Glu): step 2/2. The protein is Glutamate-1-semialdehyde 2,1-aminomutase of Chlamydia abortus (strain DSM 27085 / S26/3) (Chlamydophila abortus).